A 142-amino-acid chain; its full sequence is MKHYELLFILKPTLTEEEVKAKVDFVKEVITKNGGEIATVVEMGTRKLAYTIKKYERGTYFVIYYKAPPTLLAELTRNIRITEDIIRFLSVKYENKREIAAWERLCKGIKQTIKKEPREPREPRAPREPKAEKIEEQTFSEE.

Over residues 113–136 (IKKEPREPREPRAPREPKAEKIEE) the composition is skewed to basic and acidic residues. Residues 113–142 (IKKEPREPREPRAPREPKAEKIEEQTFSEE) form a disordered region.

Belongs to the bacterial ribosomal protein bS6 family.

Functionally, binds together with bS18 to 16S ribosomal RNA. The protein is Small ribosomal subunit protein bS6 of Campylobacter curvus (strain 525.92).